The sequence spans 189 residues: Cancer/testis antigen family 45 member A10 (189 aa).

This sequence belongs to the CT45 family.

The protein resides in the nucleus. In Homo sapiens (Human), this protein is Cancer/testis antigen family 45 member A10.